Reading from the N-terminus, the 321-residue chain is tRNA-dihydrouridine synthase B (321 aa).

FMN-binding positions include 16-18 (PMA) and Gln-70. The Proton donor role is filled by Cys-100. FMN contacts are provided by residues Lys-139, 200–202 (NGD), and 224–225 (GR).

This sequence belongs to the Dus family. DusB subfamily. Requires FMN as cofactor.

It catalyses the reaction a 5,6-dihydrouridine in tRNA + NAD(+) = a uridine in tRNA + NADH + H(+). The catalysed reaction is a 5,6-dihydrouridine in tRNA + NADP(+) = a uridine in tRNA + NADPH + H(+). Its function is as follows. Catalyzes the synthesis of 5,6-dihydrouridine (D), a modified base found in the D-loop of most tRNAs, via the reduction of the C5-C6 double bond in target uridines. This chain is tRNA-dihydrouridine synthase B, found in Escherichia coli O157:H7.